Consider the following 238-residue polypeptide: 1-(5-phosphoribosyl)-5-[(5-phosphoribosylamino)methylideneamino] imidazole-4-carboxamide isomerase (238 aa).

The Proton acceptor role is filled by D8. Catalysis depends on D130, which acts as the Proton donor.

It belongs to the HisA/HisF family.

It localises to the cytoplasm. It catalyses the reaction 1-(5-phospho-beta-D-ribosyl)-5-[(5-phospho-beta-D-ribosylamino)methylideneamino]imidazole-4-carboxamide = 5-[(5-phospho-1-deoxy-D-ribulos-1-ylimino)methylamino]-1-(5-phospho-beta-D-ribosyl)imidazole-4-carboxamide. It functions in the pathway amino-acid biosynthesis; L-histidine biosynthesis; L-histidine from 5-phospho-alpha-D-ribose 1-diphosphate: step 4/9. The polypeptide is 1-(5-phosphoribosyl)-5-[(5-phosphoribosylamino)methylideneamino] imidazole-4-carboxamide isomerase (Methanococcus maripaludis (strain C7 / ATCC BAA-1331)).